The chain runs to 87 residues: Phosphoribosyl-ATP pyrophosphatase (87 aa).

The protein belongs to the PRA-PH family.

The protein localises to the cytoplasm. It catalyses the reaction 1-(5-phospho-beta-D-ribosyl)-ATP + H2O = 1-(5-phospho-beta-D-ribosyl)-5'-AMP + diphosphate + H(+). Its pathway is amino-acid biosynthesis; L-histidine biosynthesis; L-histidine from 5-phospho-alpha-D-ribose 1-diphosphate: step 2/9. This chain is Phosphoribosyl-ATP pyrophosphatase, found in Salinibacter ruber (strain DSM 13855 / M31).